The primary structure comprises 201 residues: NADH-quinone oxidoreductase subunit C (201 aa).

It belongs to the complex I 30 kDa subunit family. As to quaternary structure, NDH-1 is composed of 14 different subunits. Subunits NuoB, C, D, E, F, and G constitute the peripheral sector of the complex.

It localises to the cell inner membrane. It catalyses the reaction a quinone + NADH + 5 H(+)(in) = a quinol + NAD(+) + 4 H(+)(out). NDH-1 shuttles electrons from NADH, via FMN and iron-sulfur (Fe-S) centers, to quinones in the respiratory chain. The immediate electron acceptor for the enzyme in this species is believed to be ubiquinone. Couples the redox reaction to proton translocation (for every two electrons transferred, four hydrogen ions are translocated across the cytoplasmic membrane), and thus conserves the redox energy in a proton gradient. The chain is NADH-quinone oxidoreductase subunit C from Ruegeria sp. (strain TM1040) (Silicibacter sp.).